The chain runs to 631 residues: DNA mismatch repair protein MutL (631 aa).

Residues glycine 389–alanine 423 are disordered.

This sequence belongs to the DNA mismatch repair MutL/HexB family.

Its function is as follows. This protein is involved in the repair of mismatches in DNA. It is required for dam-dependent methyl-directed DNA mismatch repair. May act as a 'molecular matchmaker', a protein that promotes the formation of a stable complex between two or more DNA-binding proteins in an ATP-dependent manner without itself being part of a final effector complex. This Shewanella loihica (strain ATCC BAA-1088 / PV-4) protein is DNA mismatch repair protein MutL.